Here is a 528-residue protein sequence, read N- to C-terminus: Putative B3 domain-containing protein REM15 (528 aa).

2 DNA-binding regions (TF-B3) span residues 3–95 (HQHF…LGPS) and 135–231 (CFVA…LPNE). The disordered stretch occupies residues 234–253 (EEANEVSLPEEPESDAERNL). 2 DNA-binding regions (TF-B3) span residues 279 to 376 (CFVA…IPNE) and 425 to 522 (QSSL…FCSK).

It is found in the nucleus. In Arabidopsis thaliana (Mouse-ear cress), this protein is Putative B3 domain-containing protein REM15 (REM15.15).